Consider the following 370-residue polypeptide: tRNA (guanine(26)-N(2))-dimethyltransferase (370 aa).

In terms of domain architecture, Trm1 methyltransferase spans 4-368 (TWVTEGRTTI…APLEEIRDCI (365 aa)). S-adenosyl-L-methionine-binding residues include Arg41, Arg66, Asp82, Asp108, and Ala109. Positions 237, 240, 256, and 259 each coordinate Zn(2+).

It belongs to the class I-like SAM-binding methyltransferase superfamily. Trm1 family.

The catalysed reaction is guanosine(26) in tRNA + 2 S-adenosyl-L-methionine = N(2)-dimethylguanosine(26) in tRNA + 2 S-adenosyl-L-homocysteine + 2 H(+). Dimethylates a single guanine residue at position 26 of a number of tRNAs using S-adenosyl-L-methionine as donor of the methyl groups. The sequence is that of tRNA (guanine(26)-N(2))-dimethyltransferase from Methanospirillum hungatei JF-1 (strain ATCC 27890 / DSM 864 / NBRC 100397 / JF-1).